The following is a 585-amino-acid chain: Probable glucomannan 4-beta-mannosyltransferase 7 (585 aa).

A helical membrane pass occupies residues 87-107 (VIAPTLQVAVWVCMVMSVMLV). The active site involves D188. The substrate site is built by D247 and D249. The active site involves D341. 4 helical membrane-spanning segments follow: residues 420–440 (VVAP…SVMI), 443–463 (LFIP…ITTI), 534–554 (LPEI…LIFH), and 563–583 (LYLQ…NFAC).

This sequence belongs to the glycosyltransferase 2 family. Plant cellulose synthase-like A subfamily.

It is found in the golgi apparatus membrane. The enzyme catalyses GDP-mannose + (glucomannan)n = GDP + (glucomannan)n+1.. Its function is as follows. Probable mannan synthase which consists of a 4-beta-mannosyltransferase activity on mannan using GDP-mannose. The beta-1,4-mannan product is the backbone for galactomannan synthesis by galactomannan galactosyltransferase. Galactomannan is a noncellulosic polysaccharides of plant cell wall. The chain is Probable glucomannan 4-beta-mannosyltransferase 7 from Oryza sativa subsp. japonica (Rice).